The chain runs to 1605 residues: Zinc finger protein jing homolog (1605 aa).

The segment covering 1 to 15 has biased composition (polar residues); the sequence is MQHQSLSVRNSSGIS. Disordered stretches follow at residues 1–28, 60–117, 359–388, 441–468, 856–877, 917–947, and 991–1213; these read MQHQ…VRSS, QWPW…QQSN, TRKV…TSDP, QQHQ…TQAQ, STTS…PPKL, TKAT…ASCT, and NDSG…TDFL. Over residues 64–117 the composition is skewed to low complexity; that stretch reads NTSNNTNATNSNNVQSNNNSSTATSNSSTNSNNSPAVNTPTTQNQSQPTTQQSN. A compositionally biased stretch (polar residues) spans 991-1000; that stretch reads NDSGIVANSS. The span at 1021-1030 shows a compositional bias: basic and acidic residues; it reads PQKKDEESRQ. Pro residues predominate over residues 1035–1049; sequence SPVPSPSPLSEPPVI. Composition is skewed to acidic residues over residues 1053-1090 and 1099-1110; these read SEPE…DEPH and SSEAVELPELED. Residues 1112–1126 are compositionally biased toward pro residues; that stretch reads QPSPPLPCELPPPPT. Positions 1135–1149 are enriched in low complexity; sequence LSLPPSQKSPKSLLL. Residues 1165-1201 show a composition bias toward polar residues; sequence QESMSSDQDYSNQSPLDESSPTGSAEPSESQRSTTPV. A C2H2-type 1 zinc finger spans residues 1260–1285; sequence GVCYWSNCDAQFDTSSKLLDHLQIQH. The C2H2-type 2; degenerate zinc finger occupies 1293 to 1320; the sequence is FACLWDGCKVHNKESCSRRWLERHVLSH. The C2H2-type 3 zinc finger occupies 1326 to 1350; sequence HKCIVAGCGMRFGSQLALEKHVNHH. Disordered stretches follow at residues 1352 to 1371 and 1511 to 1605; these read NNTD…LPKV and CSRS…SSTS. 2 stretches are compositionally biased toward low complexity: residues 1511–1537 and 1556–1605; these read CSRS…SLIS and KQSY…SSTS.

This sequence belongs to the AEBP2/jing C2H2-type zinc-finger family.

It is found in the nucleus. In terms of biological role, may functionally interact with Polycomb group (PcG) and trithorax group (trxG) proteins to repress transcription. The sequence is that of Zinc finger protein jing homolog from Aedes aegypti (Yellowfever mosquito).